Consider the following 345-residue polypeptide: S-adenosylmethionine:tRNA ribosyltransferase-isomerase (345 aa).

This sequence belongs to the QueA family. Monomer.

It is found in the cytoplasm. The enzyme catalyses 7-aminomethyl-7-carbaguanosine(34) in tRNA + S-adenosyl-L-methionine = epoxyqueuosine(34) in tRNA + adenine + L-methionine + 2 H(+). Its pathway is tRNA modification; tRNA-queuosine biosynthesis. Transfers and isomerizes the ribose moiety from AdoMet to the 7-aminomethyl group of 7-deazaguanine (preQ1-tRNA) to give epoxyqueuosine (oQ-tRNA). The sequence is that of S-adenosylmethionine:tRNA ribosyltransferase-isomerase from Lactococcus lactis subsp. lactis (strain IL1403) (Streptococcus lactis).